The following is a 114-amino-acid chain: T cell receptor beta variable 6-5 (114 aa).

Residues 1 to 21 (MSIGLLCCAALSLLWAGPVNA) form the signal peptide. One can recognise an Ig-like domain in the interval 22 to 114 (GVTQTPKFQV…TSVYFCASSY (93 aa)). C42 and C110 are disulfide-bonded. A glycan (N-linked (GlcNAc...) asparagine) is linked at N84.

As to quaternary structure, alpha-beta TR is a heterodimer composed of an alpha and beta chain; disulfide-linked. The alpha-beta TR is associated with the transmembrane signaling CD3 coreceptor proteins to form the TR-CD3 (TcR or TCR). The assembly of alpha-beta TR heterodimers with CD3 occurs in the endoplasmic reticulum where a single alpha-beta TR heterodimer associates with one CD3D-CD3E heterodimer, one CD3G-CD3E heterodimer and one CD247 homodimer forming a stable octameric structure. CD3D-CD3E and CD3G-CD3E heterodimers preferentially associate with TR alpha and TR beta chains, respectively. The association of the CD247 homodimer is the last step of TcR assembly in the endoplasmic reticulum and is required for transport to the cell surface.

It is found in the cell membrane. Its function is as follows. V region of the variable domain of T cell receptor (TR) beta chain that participates in the antigen recognition. Alpha-beta T cell receptors are antigen specific receptors which are essential to the immune response and are present on the cell surface of T lymphocytes. Recognize peptide-major histocompatibility (MH) (pMH) complexes that are displayed by antigen presenting cells (APC), a prerequisite for efficient T cell adaptive immunity against pathogens. Binding of alpha-beta TR to pMH complex initiates TR-CD3 clustering on the cell surface and intracellular activation of LCK that phosphorylates the ITAM motifs of CD3G, CD3D, CD3E and CD247 enabling the recruitment of ZAP70. In turn ZAP70 phosphorylates LAT, which recruits numerous signaling molecules to form the LAT signalosome. The LAT signalosome propagates signal branching to three major signaling pathways, the calcium, the mitogen-activated protein kinase (MAPK) kinase and the nuclear factor NF-kappa-B (NF-kB) pathways, leading to the mobilization of transcription factors that are critical for gene expression and essential for T cell growth and differentiation. The T cell repertoire is generated in the thymus, by V-(D)-J rearrangement. This repertoire is then shaped by intrathymic selection events to generate a peripheral T cell pool of self-MH restricted, non-autoaggressive T cells. Post-thymic interaction of alpha-beta TR with the pMH complexes shapes TR structural and functional avidity. The chain is T cell receptor beta variable 6-5 from Homo sapiens (Human).